Consider the following 982-residue polypeptide: Chromosome partition protein Smc (982 aa).

Position 33 to 40 (33 to 40) interacts with ATP; sequence PNGSGKSN. 3 coiled-coil regions span residues 171–231, 280–310, and 337–377; these read RYTK…ELAV, SADMQSNELQKELQDIYQKINELEQRKVIID, and QTQL…QIEK. The 120-residue stretch at 416–535 folds into the SMC hinge domain; that stretch reads TGILNTLGTF…AKDLNSAINL (120 aa). 2 coiled-coil regions span residues 575-718 and 753-822; these read SASL…SARE and VKLS…IASN.

Belongs to the SMC family. As to quaternary structure, homodimer.

It is found in the cytoplasm. Required for chromosome condensation and partitioning. This chain is Chromosome partition protein Smc, found in Mycoplasma genitalium (strain ATCC 33530 / DSM 19775 / NCTC 10195 / G37) (Mycoplasmoides genitalium).